Consider the following 255-residue polypeptide: Phosphoribosylformylglycinamidine synthase subunit PurQ (255 aa).

The Glutamine amidotransferase type-1 domain occupies 6–255; sequence TLILRTPGTN…TNAVKWARQV (250 aa). Residue C96 is the Nucleophile of the active site. Active-site residues include H217 and E219.

In terms of assembly, part of the FGAM synthase complex composed of 1 PurL, 1 PurQ and 2 PurS subunits.

Its subcellular location is the cytoplasm. It carries out the reaction N(2)-formyl-N(1)-(5-phospho-beta-D-ribosyl)glycinamide + L-glutamine + ATP + H2O = 2-formamido-N(1)-(5-O-phospho-beta-D-ribosyl)acetamidine + L-glutamate + ADP + phosphate + H(+). The catalysed reaction is L-glutamine + H2O = L-glutamate + NH4(+). It participates in purine metabolism; IMP biosynthesis via de novo pathway; 5-amino-1-(5-phospho-D-ribosyl)imidazole from N(2)-formyl-N(1)-(5-phospho-D-ribosyl)glycinamide: step 1/2. Part of the phosphoribosylformylglycinamidine synthase complex involved in the purines biosynthetic pathway. Catalyzes the ATP-dependent conversion of formylglycinamide ribonucleotide (FGAR) and glutamine to yield formylglycinamidine ribonucleotide (FGAM) and glutamate. The FGAM synthase complex is composed of three subunits. PurQ produces an ammonia molecule by converting glutamine to glutamate. PurL transfers the ammonia molecule to FGAR to form FGAM in an ATP-dependent manner. PurS interacts with PurQ and PurL and is thought to assist in the transfer of the ammonia molecule from PurQ to PurL. This Dehalococcoides mccartyi (strain ATCC BAA-2266 / KCTC 15142 / 195) (Dehalococcoides ethenogenes (strain 195)) protein is Phosphoribosylformylglycinamidine synthase subunit PurQ.